The following is a 210-amino-acid chain: Urease accessory protein UreE (210 aa).

Residues 136-210 (PEGGAYAEPS…HGHSHAHDHK (75 aa)) form a disordered region. Composition is skewed to basic and acidic residues over residues 145 to 169 (SHAH…TSHD) and 178 to 196 (HDHD…EHCG). The span at 197-210 (HDHHHGHSHAHDHK) shows a compositional bias: basic residues.

The protein belongs to the UreE family.

The protein resides in the cytoplasm. Its function is as follows. Involved in urease metallocenter assembly. Binds nickel. Probably functions as a nickel donor during metallocenter assembly. The sequence is that of Urease accessory protein UreE from Bradyrhizobium sp. (strain ORS 278).